Consider the following 309-residue polypeptide: Elongation factor Ts (309 aa).

Residues 82–85 (TDFV) form an involved in Mg(2+) ion dislocation from EF-Tu region.

Belongs to the EF-Ts family.

It localises to the cytoplasm. Functionally, associates with the EF-Tu.GDP complex and induces the exchange of GDP to GTP. It remains bound to the aminoacyl-tRNA.EF-Tu.GTP complex up to the GTP hydrolysis stage on the ribosome. The protein is Elongation factor Ts (tsf) of Rickettsia prowazekii (strain Madrid E).